Here is a 498-residue protein sequence, read N- to C-terminus: Protein spinster homolog 3 (498 aa).

The next 12 membrane-spanning stretches (helical) occupy residues 49–71, 87–107, 114–134, 148–168, 175–195, 207–227, 260–280, 309–329, 343–363, 373–393, 407–427, and 451–471; these read IAVA…IAGV, GLLQ…FGYL, KLIM…SSFV, LVGT…GDLF, LMIS…YIIG, WALR…VFLI, FVWS…LAFW, YIFG…GTCI, LICA…IVLA, FIAI…DILL, LQIM…IGAI, and LLCP…SLYI.

It belongs to the major facilitator superfamily. Spinster (TC 2.A.1.49) family.

It localises to the membrane. Sphingolipid transporter. This chain is Protein spinster homolog 3 (spns3), found in Danio rerio (Zebrafish).